The following is a 92-amino-acid chain: UPF0235 protein PF1765 (92 aa).

It belongs to the UPF0235 family.

The chain is UPF0235 protein PF1765 from Pyrococcus furiosus (strain ATCC 43587 / DSM 3638 / JCM 8422 / Vc1).